A 190-amino-acid polypeptide reads, in one-letter code: Elongation factor P (190 aa).

Belongs to the elongation factor P family.

The protein localises to the cytoplasm. Its pathway is protein biosynthesis; polypeptide chain elongation. Its function is as follows. Involved in peptide bond synthesis. Stimulates efficient translation and peptide-bond synthesis on native or reconstituted 70S ribosomes in vitro. Probably functions indirectly by altering the affinity of the ribosome for aminoacyl-tRNA, thus increasing their reactivity as acceptors for peptidyl transferase. This Mycoplasma pneumoniae (strain ATCC 29342 / M129 / Subtype 1) (Mycoplasmoides pneumoniae) protein is Elongation factor P (efp).